Consider the following 285-residue polypeptide: 3',5'-nucleoside bisphosphate phosphatase (285 aa).

Residues histidine 7, histidine 9, aspartate 14, histidine 39, glutamate 64, and histidine 75 each contribute to the Mn(2+) site. Aspartate 14 and histidine 39 together coordinate substrate. Substrate is bound by residues 99–102 and 134–135; these read RLER and RT. Residues histidine 191, aspartate 248, and histidine 250 each contribute to the Mn(2+) site. Histidine 250 is a substrate binding site.

Belongs to the PHP family. Monomer. Mn(2+) serves as cofactor.

It catalyses the reaction a ribonucleoside 3',5'-bisphosphate + H2O = a ribonucleoside 5'-phosphate + phosphate. Functionally, hydrolyzes 3',5'-bisphosphonucleosides (pGp, pCp, pUp, and pIp) to nucleoside 5'-phosphate and orthophosphate. Has similar catalytic efficiencies with all the bases. Also shows activity with ribonucleoside 2'-deoxyribonucleoside 3',5'-bisphosphates. Does not show activity with nucleoside 2',5'-bisphosphates. In Chromobacterium violaceum (strain ATCC 12472 / DSM 30191 / JCM 1249 / CCUG 213 / NBRC 12614 / NCIMB 9131 / NCTC 9757 / MK), this protein is 3',5'-nucleoside bisphosphate phosphatase.